A 103-amino-acid polypeptide reads, in one-letter code: Matrix Gla protein (103 aa).

The N-terminal stretch at 1–19 is a signal peptide; that stretch reads MKSLILLAILAALAVVTLC. Glutamate 21 is modified (4-carboxyglutamate). Phosphoserine occurs at positions 22, 25, and 28. Positions 51 to 97 constitute a Gla domain; that stretch reads RAKVQERIRERSKPVHELNREACDDYRLCERYAMVYGYNAAYNRYFR. 4-carboxyglutamate is present on residues glutamate 56, glutamate 60, glutamate 67, and glutamate 71. A disulfide bridge links cysteine 73 with cysteine 79. The propeptide at 97-103 is removed in mature form; probably by carboxypeptidase N; sequence RKRRGTK.

The protein belongs to the osteocalcin/matrix Gla protein family. Post-translationally, requires vitamin K-dependent gamma-carboxylation for its function.

The protein localises to the secreted. In terms of biological role, associates with the organic matrix of bone and cartilage. Thought to act as an inhibitor of bone formation. The sequence is that of Matrix Gla protein (MGP) from Homo sapiens (Human).